Consider the following 213-residue polypeptide: Pyrrolidone-carboxylate peptidase (213 aa).

Catalysis depends on residues Glu-78, Cys-141, and His-165.

This sequence belongs to the peptidase C15 family. In terms of assembly, homotetramer.

It is found in the cytoplasm. It carries out the reaction Release of an N-terminal pyroglutamyl group from a polypeptide, the second amino acid generally not being Pro.. Functionally, removes 5-oxoproline from various penultimate amino acid residues except L-proline. The chain is Pyrrolidone-carboxylate peptidase from Clostridium perfringens (strain ATCC 13124 / DSM 756 / JCM 1290 / NCIMB 6125 / NCTC 8237 / Type A).